The chain runs to 278 residues: Indole-3-glycerol phosphate synthase (278 aa).

The protein belongs to the TrpC family.

The enzyme catalyses 1-(2-carboxyphenylamino)-1-deoxy-D-ribulose 5-phosphate + H(+) = (1S,2R)-1-C-(indol-3-yl)glycerol 3-phosphate + CO2 + H2O. Its pathway is amino-acid biosynthesis; L-tryptophan biosynthesis; L-tryptophan from chorismate: step 4/5. The protein is Indole-3-glycerol phosphate synthase of Pseudomonas fluorescens (strain ATCC BAA-477 / NRRL B-23932 / Pf-5).